A 128-amino-acid chain; its full sequence is Large ribosomal subunit protein uL22 (128 aa).

Belongs to the universal ribosomal protein uL22 family. In terms of assembly, part of the 50S ribosomal subunit.

This protein binds specifically to 23S rRNA; its binding is stimulated by other ribosomal proteins, e.g. L4, L17, and L20. It is important during the early stages of 50S assembly. It makes multiple contacts with different domains of the 23S rRNA in the assembled 50S subunit and ribosome. Functionally, the globular domain of the protein is located near the polypeptide exit tunnel on the outside of the subunit, while an extended beta-hairpin is found that lines the wall of the exit tunnel in the center of the 70S ribosome. The polypeptide is Large ribosomal subunit protein uL22 (Rhodopseudomonas palustris (strain HaA2)).